The following is a 247-amino-acid chain: Lysosomal membrane ascorbate-dependent ferrireductase CYB561A3 (247 aa).

The Cytoplasmic portion of the chain corresponds to 1–3 (MRG). Residues 4 to 24 (IVGFYITYLLCLILGIACVVL) traverse the membrane as a helical segment. Residues 13-223 (LCLILGIACV…FGLVVLKILS (211 aa)) enclose the Cytochrome b561 domain. At 25–46 (VVHWNFMYRDGFAWDGSSKNFN) the chain is on the lumenal side. Residues 47 to 67 (WHPVLMVTGMLVLYGNAAVVY) form a helical membrane-spanning segment. The heme b site is built by His48 and Arg68. The Cytoplasmic portion of the chain corresponds to 68-82 (RIPLTWGHNKLPWKL). L-ascorbate-binding residues include Lys77 and Lys81. Residues 83–103 (LHAGLLLLSFIFSVIGLCAVF) form a helical membrane-spanning segment. Heme b contacts are provided by residues His84, 113-116 (NLYS), and His118. Residues 104-120 (NFHNVHHTANLYSLHSW) are Lumenal-facing. Residues 121-141 (VGICTAALFTAQWVMGFTSFL) traverse the membrane as a helical segment. Residues 142-155 (LPCTPMAVRAFVKP) lie on the Cytoplasmic side of the membrane. Arg150 contacts L-ascorbate. Residues 156–176 (THVWMGAMILVLSIVSCISGI) form a helical membrane-spanning segment. Residues His157 and Glu178 each coordinate heme b. The Lumenal portion of the chain corresponds to 177–201 (NEKLFFVLKETTNGTKPYSALPPEA). Residue Asn189 is glycosylated (N-linked (GlcNAc...) asparagine). The helical transmembrane segment at 202 to 222 (VAANSLGVIIVAFGLVVLKIL) threads the bilayer. Residues 223–247 (SNQMWQRPEPGDDEGVYRPLAYDGS) lie on the Cytoplasmic side of the membrane. Gln228 lines the heme b pocket.

Homodimer. The cofactor is heme b.

It localises to the late endosome membrane. It is found in the lysosome membrane. It catalyses the reaction Fe(3+)(out) + L-ascorbate(in) = monodehydro-L-ascorbate radical(in) + Fe(2+)(out) + H(+). Functionally, transmembrane reductase that uses ascorbate as an electron donor in the cytoplasm and transfers electrons across membranes to reduce iron cations Fe(3+) into Fe(2+) in the lumen of the late endosome and lysosome. Reduced iron can then be extruded from the late endosome and lysosome to the cytoplasm by divalent metal-specific transporters. It is therefore most probably involved in endosomal and lysosomal cellular iron homeostasis. The sequence is that of Lysosomal membrane ascorbate-dependent ferrireductase CYB561A3 (cyb561a3a) from Danio rerio (Zebrafish).